The following is a 126-amino-acid chain: Small ribosomal subunit protein uS8 (126 aa).

The protein belongs to the universal ribosomal protein uS8 family. In terms of assembly, part of the 30S ribosomal subunit. Contacts proteins S5 and S12.

One of the primary rRNA binding proteins, it binds directly to 16S rRNA central domain where it helps coordinate assembly of the platform of the 30S subunit. The sequence is that of Small ribosomal subunit protein uS8 from Lawsonia intracellularis (strain PHE/MN1-00).